The chain runs to 473 residues: Pre-mRNA-splicing factor PRP46 (473 aa).

The span at 1 to 14 shows a compositional bias: polar residues; the sequence is MSTSLETPSGTSAG. 2 disordered regions span residues 1–21 and 103–126; these read MSTSLETPSGTSAGPSIVASG and GPNVKLIGGPEAEKASSSTPQAVA. WD repeat units lie at residues 180–219, 222–261, 264–303, 306–347, 349–388, 391–429, and 440–473; these read GHMGWVRAVAMDPGSQWFATGAGDRVIKIWDLASGELKLS, GHISTIRGLAVSDRHPYLFSCAEDKMVKCWDLETNKVIRH, GHFSGVYSLSVHPTLDVLVTGGRDASVRVWDMRTRANIFT, GHTS…NTLT, HKKSVRALAIHPTEYSFASASSGGNNIKKWKCPEGIFVNN, GHEAIINTLSINSENVLFSGADNGTLTLWDYKTGLPFQH, and DAEAGVFCSTFDKTGTRLITGGADKTIKVYSEQA.

This sequence belongs to the WD repeat PRL1/PRL2 family. Associated with the spliceosome.

The protein resides in the cytoplasm. It is found in the nucleus. Functionally, involved in pre-mRNA splicing and required for cell cycle progression at G2/M. This is Pre-mRNA-splicing factor PRP46 (PRP46) from Cryptococcus neoformans var. neoformans serotype D (strain B-3501A) (Filobasidiella neoformans).